The chain runs to 706 residues: Termination factor NPH-I homolog (706 aa).

Residues 62-227 form the Helicase ATP-binding domain; that stretch reads IGQGENTRGL…VPCFNMLSGR (166 aa). 75–82 contacts ATP; the sequence is HQMGMGKT. Residues 168-171 carry the DEAH box motif; sequence DEAH. A Helicase C-terminal domain is found at 378–599; the sequence is KIVCMLKNIK…HLNSAFRDLL (222 aa).

Belongs to the DEAD box helicase family. DEAH subfamily. Part of the viral DNA-directed RNA polymerase that consists of 8 polII-like subunits (RPB1, RPB2, RPB3, RPB5, RPB6, RPB7, RPB9, RPB10), a capping enzyme and a termination factor.

It localises to the virion. In terms of biological role, putative DNA-dependent ATPase required for providing the needed energy to achieve the termination of early transcripts. This is Termination factor NPH-I homolog from African swine fever virus (isolate Pig/Kenya/KEN-50/1950) (ASFV).